A 54-amino-acid chain; its full sequence is Potassium channel toxin alpha-KTx 14.3 (54 aa).

The first 23 residues, 1 to 23 (MKIFFAILLILAVCSMAIWTVNG), serve as a signal peptide directing secretion.

Belongs to the short scorpion toxin superfamily. Potassium channel inhibitor family. Alpha-KTx 14 subfamily. Contains 3 disulfide bridges. Expressed by the venom gland.

The protein localises to the secreted. Its function is as follows. Potential blocker of potassium channels. This is Potassium channel toxin alpha-KTx 14.3 from Olivierus martensii (Manchurian scorpion).